The sequence spans 220 residues: MDSLEKIKEEVISCKKCKLWQFRTNAVPGEGYPKAEIMFVGEAPGENEDKEGRPFVGAAGKLLTQMIKEILGLERDQVFITNVVKCRPPNNRDPEEDEITACSPYLDRQIDIIMPKIIVTLGRHSTKYIFSKMGENFSSITKVRGKSYVWKYKEKEIIVFPTYHPAAALYNPNLRKILEEDFKKIRELAITPKRYTIDYFLGGKNRSWDKREKSDSNSGK.

Residues C14 and C17 each coordinate [4Fe-4S] cluster. Uracil-binding positions include 41–43 (GEA), F55, and N82. [4Fe-4S] cluster-binding residues include C86 and C102. H164 serves as a coordination point for uracil.

The protein belongs to the uracil-DNA glycosylase (UDG) superfamily. Type 4 (UDGa) family.

It catalyses the reaction Hydrolyzes single-stranded DNA or mismatched double-stranded DNA and polynucleotides, releasing free uracil.. Functionally, removes uracil bases that are present in DNA as a result of either deamination of cytosine or misincorporation of dUMP instead of dTMP. The sequence is that of Type-4 uracil-DNA glycosylase from Sulfurisphaera tokodaii (strain DSM 16993 / JCM 10545 / NBRC 100140 / 7) (Sulfolobus tokodaii).